Reading from the N-terminus, the 441-residue chain is tRNA modification GTPase MnmE (441 aa).

Residues arginine 22, glutamate 80, and lysine 118 each contribute to the (6S)-5-formyl-5,6,7,8-tetrahydrofolate site. In terms of domain architecture, TrmE-type G spans 213-366 (GIYIAIVGEP…LLNLIKQRVE (154 aa)). GTP is bound by residues 223–228 (NSGKST), 242–248 (SEYAGTT), and 267–270 (DTAG). Mg(2+) contacts are provided by serine 227 and threonine 248. Residue lysine 441 coordinates (6S)-5-formyl-5,6,7,8-tetrahydrofolate.

This sequence belongs to the TRAFAC class TrmE-Era-EngA-EngB-Septin-like GTPase superfamily. TrmE GTPase family. Homodimer. Heterotetramer of two MnmE and two MnmG subunits. Requires K(+) as cofactor.

The protein resides in the cytoplasm. Exhibits a very high intrinsic GTPase hydrolysis rate. Involved in the addition of a carboxymethylaminomethyl (cmnm) group at the wobble position (U34) of certain tRNAs, forming tRNA-cmnm(5)s(2)U34. In Ehrlichia canis (strain Jake), this protein is tRNA modification GTPase MnmE.